Reading from the N-terminus, the 501-residue chain is Cytochrome P450 3A31 (501 aa).

Cys-440 provides a ligand contact to heme.

This sequence belongs to the cytochrome P450 family. Requires heme as cofactor. As to expression, expressed constitutively in liver.

It is found in the endoplasmic reticulum membrane. The protein resides in the microsome membrane. It carries out the reaction an organic molecule + reduced [NADPH--hemoprotein reductase] + O2 = an alcohol + oxidized [NADPH--hemoprotein reductase] + H2O + H(+). Its function is as follows. Cytochromes P450 are a group of heme-thiolate monooxygenases. In liver microsomes, this enzyme is involved in an NADPH-dependent electron transport pathway. It oxidizes a variety of structurally unrelated compounds, including steroids, fatty acids, and xenobiotics. This Mesocricetus auratus (Golden hamster) protein is Cytochrome P450 3A31 (CYP3A31).